A 173-amino-acid chain; its full sequence is Ribosome maturation factor RimM (173 aa).

One can recognise a PRC barrel domain in the interval 90–169 (EDEYFWFDIL…RIDTKGAQDI (80 aa)).

It belongs to the RimM family. In terms of assembly, binds ribosomal protein uS19.

The protein resides in the cytoplasm. Functionally, an accessory protein needed during the final step in the assembly of 30S ribosomal subunit, possibly for assembly of the head region. Essential for efficient processing of 16S rRNA. May be needed both before and after RbfA during the maturation of 16S rRNA. It has affinity for free ribosomal 30S subunits but not for 70S ribosomes. This Nitratiruptor sp. (strain SB155-2) protein is Ribosome maturation factor RimM.